The chain runs to 245 residues: Collagen triple helix repeat-containing protein 1 (245 aa).

A signal peptide spans 1-32 (MHPQGRAAPPQLLLGLFLVLLLLLQLSAPISA). One can recognise a Collagen-like domain in the interval 59-92 (QGPAGVPGRDGSPGANGIPGTPGIPGRDGFKGEK). A disordered region spans residues 64 to 87 (VPGRDGSPGANGIPGTPGIPGRDG). A glycan (N-linked (GlcNAc...) asparagine) is linked at Asn-188.

In terms of processing, N-glycosylated.

It localises to the secreted. The protein localises to the extracellular space. The protein resides in the extracellular matrix. Functionally, may act as a negative regulator of collagen matrix deposition. The sequence is that of Collagen triple helix repeat-containing protein 1 (Cthrc1) from Mus musculus (Mouse).